The primary structure comprises 102 residues: uncharacterized protein (102 aa).

The next 3 helical transmembrane spans lie at 14 to 34 (IKNW…VISA), 35 to 55 (VAFT…LILI), and 76 to 96 (ILSI…HCYI).

Its subcellular location is the cell membrane. This is an uncharacterized protein from Methanocaldococcus jannaschii (strain ATCC 43067 / DSM 2661 / JAL-1 / JCM 10045 / NBRC 100440) (Methanococcus jannaschii).